The chain runs to 192 residues: dITP/XTP pyrophosphatase (192 aa).

Substrate is bound at residue 7 to 12 (SNNKNK). The active-site Proton acceptor is Asp-68. A Mg(2+)-binding site is contributed by Asp-68. Substrate contacts are provided by residues Thr-69, 148-151 (FGYD), Lys-171, and 176-177 (HR).

This sequence belongs to the HAM1 NTPase family. As to quaternary structure, homodimer. Mg(2+) serves as cofactor.

It carries out the reaction XTP + H2O = XMP + diphosphate + H(+). The catalysed reaction is dITP + H2O = dIMP + diphosphate + H(+). It catalyses the reaction ITP + H2O = IMP + diphosphate + H(+). Pyrophosphatase that catalyzes the hydrolysis of nucleoside triphosphates to their monophosphate derivatives, with a high preference for the non-canonical purine nucleotides XTP (xanthosine triphosphate), dITP (deoxyinosine triphosphate) and ITP. Seems to function as a house-cleaning enzyme that removes non-canonical purine nucleotides from the nucleotide pool, thus preventing their incorporation into DNA/RNA and avoiding chromosomal lesions. The polypeptide is dITP/XTP pyrophosphatase (Flavobacterium johnsoniae (strain ATCC 17061 / DSM 2064 / JCM 8514 / BCRC 14874 / CCUG 350202 / NBRC 14942 / NCIMB 11054 / UW101) (Cytophaga johnsonae)).